Here is a 236-residue protein sequence, read N- to C-terminus: Small ribosomal subunit protein uS2c (236 aa).

The protein belongs to the universal ribosomal protein uS2 family.

It is found in the plastid. The protein localises to the chloroplast. In Draba nemorosa (Woodland whitlowgrass), this protein is Small ribosomal subunit protein uS2c (rps2).